A 155-amino-acid polypeptide reads, in one-letter code: WPP domain-containing protein 1 (155 aa).

2 disordered regions span residues 1–41 (MAET…VTIS) and 124–155 (SVKA…SSEA). Low complexity predominate over residues 7–39 (ESITTSSPPPISETENSTTLPTTETEKNPNPVT). The segment at 28–131 (TTETEKNPNP…LESVKAKSNV (104 aa)) is WPP. Over residues 146-155 (VDSKIDSSEA) the composition is skewed to basic and acidic residues.

As to quaternary structure, binds to FPP proteins. Interacts with WAP, WIP1, WIP2 and WIP3 through its WPP domain. Interacts with HSP70-1, HSP70-3 and WIT1. Component of a ternary complex composed of WPP1, HSP70-1 and WIT1. In terms of tissue distribution, expressed in roots, stems and leaves.

The protein localises to the nucleus envelope. The protein resides in the cytoplasm. It is found in the nucleus. It localises to the golgi apparatus. Its subcellular location is the nucleus matrix. Its function is as follows. Regulates the mitotic activity in roots. Plays a role with HSP70-1 in facilitating WIT1 nuclear envelope targeting. This is WPP domain-containing protein 1 (WPP1) from Arabidopsis thaliana (Mouse-ear cress).